The chain runs to 878 residues: Pyruvate, phosphate dikinase (878 aa).

The interval 1 to 347 (MKKLIYYFGS…LYILQTRTAK (347 aa)) is N-terminal. Position 96 (Arg96) interacts with ATP. Residues 348-404 (RTAIAAIKIAVQMVEEKLISKEQALMRIDPESLNQLLHTRIDYSKGLTSIADGLPAS) are linker 1. The interval 405–502 (PGAATGIIVF…ILKQDDIITI (98 aa)) is central. Thr457 carries the phosphothreonine; by PDRP1 modification. The active-site Tele-phosphohistidine intermediate is His459. The segment at 503-537 (DGGTGKVFLGAVPLIQPTFSEESKLILEWADETSK) is linker 2. A C-terminal region spans residues 538 to 878 (LKIRTNAETV…AAAQAKIKHG (341 aa)). Substrate contacts are provided by Arg565, Arg621, Glu749, Gly770, Thr771, Asn772, and Asp773. Mg(2+) is bound at residue Glu749. A Mg(2+)-binding site is contributed by Asp773. Cys835 (proton donor) is an active-site residue.

This sequence belongs to the PEP-utilizing enzyme family. In terms of assembly, homodimer. Mg(2+) serves as cofactor. Post-translationally, phosphorylation of Thr-457 in the dark inactivates the enzyme. Dephosphorylation upon light stimulation reactivates the enzyme.

It catalyses the reaction pyruvate + phosphate + ATP = phosphoenolpyruvate + AMP + diphosphate + H(+). With respect to regulation, activated by light-induced dephosphorylation. Inhibited by dark-induced phosphorylation. Both reactions are catalyzed by PDRP1. Catalyzes the reversible phosphorylation of pyruvate and phosphate. This Rickettsia bellii (strain RML369-C) protein is Pyruvate, phosphate dikinase (ppdK).